The sequence spans 176 residues: ATP-dependent protease subunit HslV (176 aa).

The active site involves Thr-5. 3 residues coordinate Na(+): Ala-161, Cys-164, and Thr-167.

This sequence belongs to the peptidase T1B family. HslV subfamily. A double ring-shaped homohexamer of HslV is capped on each side by a ring-shaped HslU homohexamer. The assembly of the HslU/HslV complex is dependent on binding of ATP.

Its subcellular location is the cytoplasm. It catalyses the reaction ATP-dependent cleavage of peptide bonds with broad specificity.. Its activity is regulated as follows. Allosterically activated by HslU binding. Protease subunit of a proteasome-like degradation complex believed to be a general protein degrading machinery. The chain is ATP-dependent protease subunit HslV from Caldicellulosiruptor bescii (strain ATCC BAA-1888 / DSM 6725 / KCTC 15123 / Z-1320) (Anaerocellum thermophilum).